Here is a 370-residue protein sequence, read N- to C-terminus: Histidinol-phosphate aminotransferase (370 aa).

Residue K231 is modified to N6-(pyridoxal phosphate)lysine.

The protein belongs to the class-II pyridoxal-phosphate-dependent aminotransferase family. Histidinol-phosphate aminotransferase subfamily. In terms of assembly, homodimer. It depends on pyridoxal 5'-phosphate as a cofactor.

The catalysed reaction is L-histidinol phosphate + 2-oxoglutarate = 3-(imidazol-4-yl)-2-oxopropyl phosphate + L-glutamate. The protein operates within amino-acid biosynthesis; L-histidine biosynthesis; L-histidine from 5-phospho-alpha-D-ribose 1-diphosphate: step 7/9. The sequence is that of Histidinol-phosphate aminotransferase from Paracidovorax citrulli (strain AAC00-1) (Acidovorax citrulli).